Reading from the N-terminus, the 512-residue chain is Cytokinin hydroxylase (512 aa).

A helical membrane pass occupies residues 2–22 (MVTLVLKYVLVIVMTLILRVL). Heme is bound at residue Cys458.

The protein belongs to the cytochrome P450 family. It depends on heme as a cofactor. In terms of tissue distribution, specifically expressed in roots.

It localises to the membrane. The catalysed reaction is N(6)-(dimethylallyl)adenosine 5'-phosphate + NADPH + O2 + H(+) = 9-ribosyl-trans-zeatin 5'-phosphate + NADP(+) + H2O. It catalyses the reaction N(6)-(dimethylallyl)adenosine 5'-diphosphate + NADPH + O2 + H(+) = 9-ribosyl-trans-zeatin 5'-diphosphate + NADP(+) + H2O. It carries out the reaction N(6)-(dimethylallyl)adenosine 5'-triphosphate + NADPH + O2 + H(+) = 9-ribosyl-trans-zeatin 5'-triphosphate + NADP(+) + H2O. In terms of biological role, cytokinin hydroxylase that catalyzes the biosynthesis of trans-zeatin via the isopentenyladenine riboside 5'-monophosphate (iPRMP)-dependent pathway. Can use isopentenyladenosine-5'-monophosphate, isopentenyladenosine-5'-diphosphate and isopentenyladenosine-5'-triphosphate as substrate. This chain is Cytokinin hydroxylase (CYP735A2), found in Arabidopsis thaliana (Mouse-ear cress).